A 243-amino-acid chain; its full sequence is MSLHKTIYIKFNNRDYDVKLTNVKIANIALNNDNVNNIEQNHISFRHLSTNDIKNSNDKVEAKFSIGLGFDISEKLKNIAFKKLDTNTNKLIDISDPTILRLTFYEYNKDQKVENNLAAPTDKTKISVVEIKKSQLMNSSIVSFVKKLNKNAKYHMANIAFNQQLLPYLNKQFNVNADFPIDLEQNPIDFNDNKQANDEKIKKTKESAIKVATAIAKQIVGIDYKGRDIIKNFIELDNVVNKK.

This is an uncharacterized protein from Ureaplasma parvum serovar 3 (strain ATCC 700970).